The following is a 950-amino-acid chain: Oxysterol-binding protein-related protein 1 (950 aa).

Positions 1-237 are interaction with RAB7A; it reads MNTEAEQQLL…NKVVHKALKR (237 aa). 3 ANK repeats span residues 47–76, 80–109, and 175–204; these read LGWTPLHLACYFGHKQVVQDLLKAGAKVNM, MGDTPLHRAAFTGRKELVMLLLEYNADTTV, and LGNTPLHCAAYRAHKQCVLKLLRSGADPSL. The region spanning 235–334 is the PH domain; that stretch reads LKRFEGPLWK…WLEAIEEHSA (100 aa). Residues 430-463 adopt a coiled-coil conformation; it reads NFKLEQEQEKNKILSEALETLATEHHELERSLVE. Residues 469–483 carry the FFAT motif; the sequence is SILSEDEFYDALSGS. Disordered regions lie at residues 795–821 and 881–913; these read KKNTEEKKTSKQASTSEESDEMPVPDS and MENGEIDQASEEKKRLEEKQRAARKNRSKSEED. Residues 877–913 adopt a coiled-coil conformation; the sequence is DIRAMENGEIDQASEEKKRLEEKQRAARKNRSKSEED. The span at 890 to 901 shows a compositional bias: basic and acidic residues; that stretch reads SEEKKRLEEKQR.

It belongs to the OSBP family. Interacts (via FFAT motif) with VAPA. Interacts (via FFAT motif) with VAPB. Interacts with the GTP-bound form of RAB7A. Interacts with OAS1B. Interacts (via FFAT motif) with MOSPD2 (via MSP domain). Detected in prostate and liver.

It is found in the late endosome. Its function is as follows. Binds phospholipids; exhibits strong binding to phosphatidic acid and weak binding to phosphatidylinositol 3-phosphate. Stabilizes GTP-bound RAB7A on late endosomes/lysosomes and alters functional properties of late endocytic compartments via its interaction with RAB7A. Binds 25-hydroxycholesterol and cholesterol. This is Oxysterol-binding protein-related protein 1 from Rattus norvegicus (Rat).